A 313-amino-acid chain; its full sequence is Dioxygenase swnH2 (313 aa).

The Fe cation site is built by histidine 155, aspartate 157, and histidine 232.

This sequence belongs to the PhyH family. As to quaternary structure, homodimer. It depends on Fe cation as a cofactor.

The protein operates within mycotoxin biosynthesis. In terms of biological role, aminotransferase; part of the gene cluster that mediates the biosynthesis of swainsonine (SW), a cytotoxic fungal alkaloid and a potential cancer therapy drug. Swainsonine production occurs via a multibranched pathway and is dispensable for fungal colonization of plants and infection of insect hosts. The first step of swainsonine biosynthesis is the production of the precursor pipecolic acid (PA) via conversion of L-lysine (Lys) to 1-piperideine-6-carboxylate (P6C) by the aminotransferase swnA, the latter being further reduced to PA by the reductase swnR. The PKS-NRPS hybrid synthetase swnK uptakes and condensates PA and malonyl-CoA with and without skipping of the ketoreductase (KR) domain in order to produce 3 intermediates, 1-oxoindolizidine, (1S)-1-hydroxyindolizin, and (1R)-1-hydroxyindolizine; with the transisomer (1S)-1-hydroxyindolizin being predominant. The terminal thioester reductase (TE) domain of swnK is involved in reduction of the thioester bond to release the intermediate aldehydes. The oxidoreductase swnN could contribute to the reduction of 1-oxoindolizidine to (1S)-1-hydroxyindolizin and (1R)-1-hydroxyindolizine, contributing to the major route of SW production. The dioxygenase swnH2 would be responsible for the oxidization of (1R)-1-hydroxyindolizine into (1R,2S)-1,2-dihydroxyindolizine and of (1S)-1-hydroxyindolizin to yield both (1R,2S)-1,2-dihydroxyindolizine and (1S,2S)-1,2-dihydroxyindolizine. The dioxygenase swnH1 then performs the conversion of the 1,2-dihydroxyindolizine epimers to SW. This Arthroderma benhamiae (strain ATCC MYA-4681 / CBS 112371) (Trichophyton mentagrophytes) protein is Dioxygenase swnH2.